The primary structure comprises 124 residues: UPF0231 protein Shewmr4_0656 (124 aa).

It belongs to the UPF0231 family.

This chain is UPF0231 protein Shewmr4_0656, found in Shewanella sp. (strain MR-4).